We begin with the raw amino-acid sequence, 560 residues long: Hypermethylated in cancer 2 protein (560 aa).

The BTB domain maps to Cys-24–Asp-87. Disordered stretches follow at residues Arg-122–Arg-163 and His-183–Asn-367. 2 stretches are compositionally biased toward polar residues: residues Asn-126–Ser-153 and His-183–Cys-203. A compositionally biased stretch (low complexity) spans Glu-224–Ser-242. Residues Thr-243–Thr-259 show a composition bias toward polar residues. Basic and acidic residues predominate over residues Pro-296 to Arg-308. Residues Glu-348 to Asn-362 are compositionally biased toward low complexity. C2H2-type zinc fingers lie at residues Tyr-387–His-409, Phe-450–His-472, Phe-478–His-500, Phe-506–His-528, and Tyr-534–His-556.

The protein belongs to the krueppel C2H2-type zinc-finger protein family. Hic subfamily.

It is found in the nucleus. Functionally, transcriptional repressor. The polypeptide is Hypermethylated in cancer 2 protein (hic2) (Danio rerio (Zebrafish)).